The following is a 292-amino-acid chain: ATP-dependent Clp protease proteolytic subunit 4, chloroplastic (292 aa).

The transit peptide at Met-1–Met-65 directs the protein to the chloroplast. At Ser-66 the chain carries N-acetylserine. Ser-158 acts as the Nucleophile in catalysis. His-183 is an active-site residue.

It belongs to the peptidase S14 family. In terms of assembly, component of the chloroplastic Clp protease core complex which consist of at least 16 proteins: CLPP4 (3 copies), CLPP5 (3 copies), CLPR4 (2 copies), ClpP1 (1 copy), CLPP6 (1 copy), CLPR2 (1 copy), CLPT1 (1 copy), CLPT2 (1 copy) and 3 copies of CLPP3 and/or CLPR1 and/or CLPR3. Interacts with CHIP. The core complex is organized in two heptameric rings, one containing CLPP3,4,5,6 in a 1:2:3:1 ratio and the other CLPP1 and CLPR1,2,3,4 in a 3:1:1:1:1 ratio. Ubiquitinated by CHIP. Mostly expressed in leaves. Also detected in stems, and to a lower extent, in roots (at protein level).

It is found in the plastid. Its subcellular location is the chloroplast stroma. It catalyses the reaction Hydrolysis of proteins to small peptides in the presence of ATP and magnesium. alpha-casein is the usual test substrate. In the absence of ATP, only oligopeptides shorter than five residues are hydrolyzed (such as succinyl-Leu-Tyr-|-NHMec, and Leu-Tyr-Leu-|-Tyr-Trp, in which cleavage of the -Tyr-|-Leu- and -Tyr-|-Trp bonds also occurs).. Cleaves peptides in various proteins in a process that requires ATP hydrolysis. Has a chymotrypsin-like activity. Plays a major role in the degradation of misfolded proteins. Essential protein required for chloroplast development and integrity. Essential for Embryogenesis. This Arabidopsis thaliana (Mouse-ear cress) protein is ATP-dependent Clp protease proteolytic subunit 4, chloroplastic.